The chain runs to 377 residues: Alanine racemase (377 aa).

Residue K37 is the Proton acceptor; specific for D-alanine of the active site. N6-(pyridoxal phosphate)lysine is present on K37. R135 is a binding site for substrate. The active-site Proton acceptor; specific for L-alanine is Y271. Position 319 (M319) interacts with substrate.

It belongs to the alanine racemase family. It depends on pyridoxal 5'-phosphate as a cofactor.

The enzyme catalyses L-alanine = D-alanine. Its pathway is amino-acid biosynthesis; D-alanine biosynthesis; D-alanine from L-alanine: step 1/1. Catalyzes the interconversion of L-alanine and D-alanine. May also act on other amino acids. The sequence is that of Alanine racemase (alr) from Helicobacter pylori (strain P12).